The following is a 640-amino-acid chain: Transcription factor VHR1 (640 aa).

Over residues 118 to 128 (NVNNSISSNST) the composition is skewed to low complexity. Positions 118–139 (NVNNSISSNSTSDDEISPSIYQ) are disordered. Ser-409 carries the post-translational modification Phosphoserine. Residues 580–640 (NRISKSPMNE…LPQPVFQPLL (61 aa)) form a disordered region. Over residues 588–608 (NEENSNTTLNTGTSTSNTNNN) the composition is skewed to low complexity. Positions 621-631 (KNKNSFQNGNL) are enriched in polar residues.

The protein belongs to the VHR1 family.

It localises to the cytoplasm. The protein resides in the nucleus. Functionally, transcription factor that binds to the VHRE consensus sequence in promoters of VHT1 and BIO5, and regulates their biotin-dependent expression. In Saccharomyces cerevisiae (strain ATCC 204508 / S288c) (Baker's yeast), this protein is Transcription factor VHR1 (VHR1).